We begin with the raw amino-acid sequence, 269 residues long: Tryptophan synthase alpha chain (269 aa).

Residues E45 and D56 each act as proton acceptor in the active site.

Belongs to the TrpA family. As to quaternary structure, tetramer of two alpha and two beta chains.

It carries out the reaction (1S,2R)-1-C-(indol-3-yl)glycerol 3-phosphate + L-serine = D-glyceraldehyde 3-phosphate + L-tryptophan + H2O. The protein operates within amino-acid biosynthesis; L-tryptophan biosynthesis; L-tryptophan from chorismate: step 5/5. In terms of biological role, the alpha subunit is responsible for the aldol cleavage of indoleglycerol phosphate to indole and glyceraldehyde 3-phosphate. This Shouchella clausii (strain KSM-K16) (Alkalihalobacillus clausii) protein is Tryptophan synthase alpha chain.